Reading from the N-terminus, the 372-residue chain is PqqA peptide cyclase (372 aa).

A Radical SAM core domain is found at 4-220 (APPPLSVLLE…ETARRQLGDR (217 aa)). Positions 18, 22, and 25 each coordinate [4Fe-4S] cluster. Positions 342–372 (ATAEQESASPAPAFIYRRPERPAAATADPLE) are disordered.

Belongs to the radical SAM superfamily. PqqE family. Interacts with PqqD. The interaction is necessary for activity of PqqE. Requires [4Fe-4S] cluster as cofactor.

It catalyses the reaction [PQQ precursor protein] + S-adenosyl-L-methionine = E-Y cross-linked-[PQQ precursor protein] + 5'-deoxyadenosine + L-methionine + H(+). It functions in the pathway cofactor biosynthesis; pyrroloquinoline quinone biosynthesis. In terms of biological role, catalyzes the cross-linking of a glutamate residue and a tyrosine residue in the PqqA protein as part of the biosynthesis of pyrroloquinoline quinone (PQQ). The chain is PqqA peptide cyclase from Xanthomonas euvesicatoria pv. vesicatoria (strain 85-10) (Xanthomonas campestris pv. vesicatoria).